An 83-amino-acid chain; its full sequence is Small ribosomal subunit protein bS16 (83 aa).

The protein belongs to the bacterial ribosomal protein bS16 family.

The sequence is that of Small ribosomal subunit protein bS16 from Borrelia hermsii (strain HS1 / DAH).